We begin with the raw amino-acid sequence, 600 residues long: Elongation factor 4 (600 aa).

Residues 5–187 (SRIRNFSIIA…AIVTRLPPPK (183 aa)) form the tr-type G domain. GTP is bound by residues 17 to 22 (DHGKST) and 134 to 137 (NKID).

It belongs to the TRAFAC class translation factor GTPase superfamily. Classic translation factor GTPase family. LepA subfamily.

It localises to the cell inner membrane. The enzyme catalyses GTP + H2O = GDP + phosphate + H(+). In terms of biological role, required for accurate and efficient protein synthesis under certain stress conditions. May act as a fidelity factor of the translation reaction, by catalyzing a one-codon backward translocation of tRNAs on improperly translocated ribosomes. Back-translocation proceeds from a post-translocation (POST) complex to a pre-translocation (PRE) complex, thus giving elongation factor G a second chance to translocate the tRNAs correctly. Binds to ribosomes in a GTP-dependent manner. This Rhodospirillum centenum (strain ATCC 51521 / SW) protein is Elongation factor 4.